Here is a 213-residue protein sequence, read N- to C-terminus: Pyrrolidone-carboxylate peptidase (213 aa).

Catalysis depends on residues E78, C141, and H165.

This sequence belongs to the peptidase C15 family. Homotetramer.

The protein localises to the cytoplasm. It catalyses the reaction Release of an N-terminal pyroglutamyl group from a polypeptide, the second amino acid generally not being Pro.. Functionally, removes 5-oxoproline from various penultimate amino acid residues except L-proline. The sequence is that of Pyrrolidone-carboxylate peptidase from Staphylococcus carnosus (strain TM300).